The chain runs to 373 residues: Chaperone protein DnaJ (373 aa).

In terms of domain architecture, J spans 5 to 71 (DYYEILGVSR…EKRAMYDKFG (67 aa)). The CR-type zinc finger occupies 144-226 (GVKIPLEYDR…CGGTGRIRKR (83 aa)). Zn(2+)-binding residues include C157, C160, C174, C177, C200, C203, C214, and C217. CXXCXGXG motif repeat units follow at residues 157 to 164 (CEHCHGEG), 174 to 181 (CPKCHGTG), 200 to 207 (CNQCGGTG), and 214 to 221 (CRVCGGTG).

The protein belongs to the DnaJ family. In terms of assembly, homodimer. Requires Zn(2+) as cofactor.

It is found in the cytoplasm. Its function is as follows. Participates actively in the response to hyperosmotic and heat shock by preventing the aggregation of stress-denatured proteins and by disaggregating proteins, also in an autonomous, DnaK-independent fashion. Unfolded proteins bind initially to DnaJ; upon interaction with the DnaJ-bound protein, DnaK hydrolyzes its bound ATP, resulting in the formation of a stable complex. GrpE releases ADP from DnaK; ATP binding to DnaK triggers the release of the substrate protein, thus completing the reaction cycle. Several rounds of ATP-dependent interactions between DnaJ, DnaK and GrpE are required for fully efficient folding. Also involved, together with DnaK and GrpE, in the DNA replication of plasmids through activation of initiation proteins. This is Chaperone protein DnaJ from Thermosipho melanesiensis (strain DSM 12029 / CIP 104789 / BI429).